The following is an 867-amino-acid chain: Mitochondrial escape protein 2 (867 aa).

2 disordered regions span residues 1-20 (MISA…RGPR) and 44-66 (RTTR…KESG). Residues 1–41 (MISAHILSRQATRPGHRGPRFTTHSTALLVQRSLGQGLPLA) constitute a mitochondrion transit peptide. At 42-308 (HRRTTRAWES…IWAWFTSHPR (267 aa)) the chain is on the mitochondrial matrix side. Positions 48 to 59 (AWESTSSSTAST) are enriched in low complexity. One can recognise an RRM domain in the interval 203–293 (SRIRVEFVAA…TKLRLSYEQR (91 aa)). Residues 309-329 (IVIPLVAALIAAFTVAVFDPI) traverse the membrane as a helical segment. The Mitochondrial intermembrane portion of the chain corresponds to 330–867 (REFFVKAHVQ…GVVKGQMVKG (538 aa)). Over residues 614 to 639 (FAHDGQQKDSESGDQDNDNKNQKKDS) the composition is skewed to basic and acidic residues. The disordered stretch occupies residues 614–647 (FAHDGQQKDSESGDQDNDNKNQKKDSNTPAPLDP). The stretch at 797 to 857 (LLVLTELAKM…ARLKGLEKEM (61 aa)) forms a coiled coil.

It belongs to the YME2 family.

The protein resides in the mitochondrion inner membrane. In terms of biological role, plays a role in maintaining the mitochondrial genome and in controlling the mtDNA escape. Involved in the regulation of mtDNA nucleotide structure and number. May have a dispensable role in early maturation of pre-rRNA. The chain is Mitochondrial escape protein 2 (msp-45) from Neurospora crassa (strain ATCC 24698 / 74-OR23-1A / CBS 708.71 / DSM 1257 / FGSC 987).